We begin with the raw amino-acid sequence, 313 residues long: N-acetyl-gamma-glutamyl-phosphate reductase (313 aa).

C117 is an active-site residue.

This sequence belongs to the NAGSA dehydrogenase family. Type 2 subfamily.

The protein localises to the cytoplasm. The catalysed reaction is N-acetyl-L-glutamate 5-semialdehyde + phosphate + NADP(+) = N-acetyl-L-glutamyl 5-phosphate + NADPH + H(+). The protein operates within amino-acid biosynthesis; L-arginine biosynthesis; N(2)-acetyl-L-ornithine from L-glutamate: step 3/4. Catalyzes the NADPH-dependent reduction of N-acetyl-5-glutamyl phosphate to yield N-acetyl-L-glutamate 5-semialdehyde. The sequence is that of N-acetyl-gamma-glutamyl-phosphate reductase from Burkholderia cenocepacia (strain ATCC BAA-245 / DSM 16553 / LMG 16656 / NCTC 13227 / J2315 / CF5610) (Burkholderia cepacia (strain J2315)).